Here is a 235-residue protein sequence, read N- to C-terminus: Small ribosomal subunit protein uS3 (235 aa).

Residues 39–107 (IRQYVFKALP…DVSLNIVEIR (69 aa)) form the KH type-2 domain.

This sequence belongs to the universal ribosomal protein uS3 family. Part of the 30S ribosomal subunit. Forms a tight complex with proteins S10 and S14.

Functionally, binds the lower part of the 30S subunit head. Binds mRNA in the 70S ribosome, positioning it for translation. This Sphingopyxis alaskensis (strain DSM 13593 / LMG 18877 / RB2256) (Sphingomonas alaskensis) protein is Small ribosomal subunit protein uS3.